We begin with the raw amino-acid sequence, 671 residues long: NADH-quinone oxidoreductase subunit G (671 aa).

Positions 1–78 constitute a 2Fe-2S ferredoxin-type domain; that stretch reads MIKLNVDGSE…GMVIHTDTPM (78 aa). Residues cysteine 34, cysteine 45, cysteine 48, and cysteine 62 each coordinate [2Fe-2S] cluster. The 4Fe-4S His(Cys)3-ligated-type domain occupies 78–117; sequence MVKKAREGVMEFLLINHPLDCPICDQGGECNLQDQAFRYG. Residues histidine 94, cysteine 98, cysteine 101, cysteine 107, cysteine 146, cysteine 149, cysteine 152, and cysteine 196 each coordinate [4Fe-4S] cluster. The 4Fe-4S Mo/W bis-MGD-type domain occupies 215–271; sequence LKHTASIGVHDAEGSNIRIDSRGDEVMRILPRVNEEINEEWLSDKNRFSYDGLKYQR.

Belongs to the complex I 75 kDa subunit family. The cofactor is [2Fe-2S] cluster. Requires [4Fe-4S] cluster as cofactor.

The enzyme catalyses a quinone + NADH + 5 H(+)(in) = a quinol + NAD(+) + 4 H(+)(out). In terms of biological role, NDH-1 shuttles electrons from NADH, via FMN and iron-sulfur (Fe-S) centers, to quinones in the respiratory chain. Couples the redox reaction to proton translocation (for every two electrons transferred, four hydrogen ions are translocated across the cytoplasmic membrane), and thus conserves the redox energy in a proton gradient. In Rickettsia conorii (strain ATCC VR-613 / Malish 7), this protein is NADH-quinone oxidoreductase subunit G (nuoG).